A 557-amino-acid chain; its full sequence is Nicotinate phosphoribosyltransferase 2 (557 aa).

Nicotinate is bound by residues Tyr-31 and Thr-219. His-222 bears the Phosphohistidine mark. Arg-329 is a nicotinate binding site. 5-phospho-alpha-D-ribose 1-diphosphate is bound at residue Thr-391.

This sequence belongs to the NAPRTase family. Mg(2+) is required as a cofactor. Requires Mn(2+) as cofactor. Post-translationally, transiently phosphorylated on a His residue during the reaction cycle. Phosphorylation strongly increases the affinity for substrates and increases the rate of nicotinate D-ribonucleotide production. Dephosphorylation regenerates the low-affinity form of the enzyme, leading to product release.

The catalysed reaction is nicotinate + 5-phospho-alpha-D-ribose 1-diphosphate + ATP + H2O = nicotinate beta-D-ribonucleotide + ADP + phosphate + diphosphate. Its pathway is cofactor biosynthesis; NAD(+) biosynthesis; nicotinate D-ribonucleotide from nicotinate: step 1/1. Its function is as follows. Catalyzes the first step in the biosynthesis of NAD from nicotinic acid, the ATP-dependent synthesis of beta-nicotinate D-ribonucleotide from nicotinate and 5-phospho-D-ribose 1-phosphate. Helps prevent cellular oxidative stress via its role in NAD biosynthesis. The sequence is that of Nicotinate phosphoribosyltransferase 2 from Arabidopsis thaliana (Mouse-ear cress).